The following is an 87-amino-acid chain: Diazepam-binding inhibitor-like 5 (87 aa).

The region spanning 2 to 87 (SQVEFEMACA…VEELKKNETC (86 aa)) is the ACB domain. An acyl-CoA contacts are provided by residues 29-33 (YSFYK), Lys55, and Tyr74.

It belongs to the ACBP family. As to expression, testis.

The protein resides in the cytoplasm. Functionally, may be involved in the energy metabolism of the mature sperm. In Rattus norvegicus (Rat), this protein is Diazepam-binding inhibitor-like 5 (Dbil5).